The chain runs to 475 residues: Aspartyl/glutamyl-tRNA(Asn/Gln) amidotransferase subunit B (475 aa).

Belongs to the GatB/GatE family. GatB subfamily. In terms of assembly, heterotrimer of A, B and C subunits.

The enzyme catalyses L-glutamyl-tRNA(Gln) + L-glutamine + ATP + H2O = L-glutaminyl-tRNA(Gln) + L-glutamate + ADP + phosphate + H(+). It carries out the reaction L-aspartyl-tRNA(Asn) + L-glutamine + ATP + H2O = L-asparaginyl-tRNA(Asn) + L-glutamate + ADP + phosphate + 2 H(+). Functionally, allows the formation of correctly charged Asn-tRNA(Asn) or Gln-tRNA(Gln) through the transamidation of misacylated Asp-tRNA(Asn) or Glu-tRNA(Gln) in organisms which lack either or both of asparaginyl-tRNA or glutaminyl-tRNA synthetases. The reaction takes place in the presence of glutamine and ATP through an activated phospho-Asp-tRNA(Asn) or phospho-Glu-tRNA(Gln). This Chlorobium phaeobacteroides (strain BS1) protein is Aspartyl/glutamyl-tRNA(Asn/Gln) amidotransferase subunit B.